Reading from the N-terminus, the 124-residue chain is MAIAKEDILAAVEGMTVLELNELVKAFEEKFGVSAAAVAVAGPAAGGAAAAAEEKTEFTVVLAEAGSNKVAVIKAVRELTGLGLKEAKDLVDGAPKPVKEGVDKAAADEAKKKLEDAGAKVEVK.

It belongs to the bacterial ribosomal protein bL12 family. In terms of assembly, homodimer. Part of the ribosomal stalk of the 50S ribosomal subunit. Forms a multimeric L10(L12)X complex, where L10 forms an elongated spine to which 2 to 4 L12 dimers bind in a sequential fashion. Binds GTP-bound translation factors.

Forms part of the ribosomal stalk which helps the ribosome interact with GTP-bound translation factors. Is thus essential for accurate translation. This is Large ribosomal subunit protein bL12 from Burkholderia thailandensis (strain ATCC 700388 / DSM 13276 / CCUG 48851 / CIP 106301 / E264).